The following is a 137-amino-acid chain: Large ribosomal subunit protein uL22c (137 aa).

The protein belongs to the universal ribosomal protein uL22 family. As to quaternary structure, part of the 50S ribosomal subunit.

The protein resides in the plastid. The protein localises to the chloroplast. Functionally, this protein binds specifically to 23S rRNA. The globular domain of the protein is located near the polypeptide exit tunnel on the outside of the subunit, while an extended beta-hairpin is found that lines the wall of the exit tunnel in the center of the 70S ribosome. This is Large ribosomal subunit protein uL22c (rpl22) from Oenothera argillicola (Appalachian evening primrose).